We begin with the raw amino-acid sequence, 763 residues long: Phosphoglycerol transferase I (763 aa).

4 helical membrane-spanning segments follow: residues 1 to 21 (MSELLSFALFLASVLIYAWKA), 26 to 46 (WWFAATLTVLGLFVVLNITLF), 77 to 97 (ILPGIGIVLGLAAVFGALGWI), and 108 to 128 (FGYSLLALLLALGSVDASPAF).

It belongs to the OpgB family.

It localises to the cell inner membrane. The catalysed reaction is a phosphatidylglycerol + a membrane-derived-oligosaccharide D-glucose = a 1,2-diacyl-sn-glycerol + a membrane-derived-oligosaccharide 6-(glycerophospho)-D-glucose.. It participates in glycan metabolism; osmoregulated periplasmic glucan (OPG) biosynthesis. In terms of biological role, transfers a phosphoglycerol residue from phosphatidylglycerol to the membrane-bound nascent glucan backbones. This Escherichia coli (strain UTI89 / UPEC) protein is Phosphoglycerol transferase I.